The chain runs to 169 residues: Protein-export protein SecB (169 aa).

This sequence belongs to the SecB family. In terms of assembly, homotetramer, a dimer of dimers. One homotetramer interacts with 1 SecA dimer.

It localises to the cytoplasm. Functionally, one of the proteins required for the normal export of preproteins out of the cell cytoplasm. It is a molecular chaperone that binds to a subset of precursor proteins, maintaining them in a translocation-competent state. It also specifically binds to its receptor SecA. This Alteromonas mediterranea (strain DSM 17117 / CIP 110805 / LMG 28347 / Deep ecotype) protein is Protein-export protein SecB.